Reading from the N-terminus, the 905-residue chain is Gamma-tubulin complex component 2 (905 aa).

A Phosphotyrosine modification is found at Y83. Positions 877-905 (AERSQKAAPQVPVPRGPSAPAPRVAIPAQ) are disordered. Pro residues predominate over residues 887–896 (VPVPRGPSAP).

Belongs to the TUBGCP family. In terms of assembly, component of the gamma-tubulin ring complex (gTuRC) consisting of TUBGCP2, TUBGCP3, TUBGCP4, TUBGCP5 and TUBGCP6 and gamma-tubulin TUBG1 or TUBG2. TUBGCP2, TUBGCP3, TUBGCP4, TUBGCP5 and TUBGCP6 assemble in a 5:5:2:1:1 stoichiometry; each is associated with a gamma-tubulin, thereby arranging 14 gamma-tubulins in a helical manner. Gamma-tubulin at the first position is blocked by TUBGCP3 at the last position, allowing 13 protafilaments to grow into a microtubule. The gTuRC (via TUBGCP3 and TUBGCP6) interacts with ACTB and MZT1; the interactions form a luminal bridge that stabilizes the initial structure during complex assembly. The gTuRC (via TUBGCP2) interacts with MZT2A/MZT2B and CDK5RAP2 (via CM1 motif); the interactions play a role in gTuRC activation. Interacts with ATF5; the ATF5:PCNT:polyglutamylated tubulin (PGT) tripartite unites the mother centriole and the pericentriolar material (PCM) in the centrosome.

The protein localises to the cytoplasm. It localises to the cytoskeleton. It is found in the microtubule organizing center. The protein resides in the centrosome. Component of the gamma-tubulin ring complex (gTuRC) which mediates microtubule nucleation. The gTuRC regulates the minus-end nucleation of alpha-beta tubulin heterodimers that grow into microtubule protafilaments, a critical step in centrosome duplication and spindle formation. Plays a role in neuronal migration. The chain is Gamma-tubulin complex component 2 (Tubgcp2) from Mus musculus (Mouse).